The following is a 1030-amino-acid chain: MMS19 nucleotide excision repair protein homolog (1030 aa).

N-acetylalanine is present on A2. At K496 the chain carries N6-acetyllysine. 4 HEAT repeats span residues 866–904, 908–946, 949–987, and 990–1028; these read QRFFTDNVPALVQGFHAAPQDVKPNYLKGLSHVLNRLPK, LPELPTLLSLLLEALSCPDCVVQLSTLSCLQPLLLEAPQ, SLHVDTLVTKFLNLSSSPSMAVRIAALQCMHALTRLPTP, and LPYKPQVIRALAKPLDDKKRLVRKEAVSARGEWFLLGSP. A Phosphoserine modification is found at S1027.

This sequence belongs to the MET18/MMS19 family. As to quaternary structure, component of the CIA complex. In the CIA complex, interacts directly with CIAO2B and CIAO3. Component of the MMXD complex, composed of CIAO1, ERCC2, CIAO2B, MMS19 and SLC25A5. Interacts with CIAO2B; the interaction is direct. Interacts with ERCC2/XPD; the interaction is direct. Interacts with ERCC3/XPB and NCOA3/RAC3. Interacts with RTEL1; the interaction mediates the association of RTEL1 with the CIA complex. Interacts with BRIP1. Interacts with KIF4A; the interaction facilitates the transfer of Fe-S clusters to KIF4A to ensure proper localization of KIF4A to the mitotic machinery components. Interacts with CCDC117; the interaction is indirect. Ubiquitinated; undergoes 'Lys-48'-linked polyubiquitination by MAGEF1-NSMCE1 ubiquitin ligase complex leading to proteasomal degradation. Ubiquitously expressed with higher expression in testis.

The protein localises to the nucleus. It localises to the cytoplasm. It is found in the cytoskeleton. The protein resides in the spindle. Its subcellular location is the microtubule organizing center. The protein localises to the centrosome. In terms of biological role, key component of the cytosolic iron-sulfur protein assembly (CIA) complex, a multiprotein complex that mediates the incorporation of iron-sulfur cluster into apoproteins specifically involved in DNA metabolism and genomic integrity. In the CIA complex, MMS19 acts as an adapter between early-acting CIA components and a subset of cellular target iron-sulfur proteins such as ERCC2/XPD, FANCJ and RTEL1, thereby playing a key role in nucleotide excision repair (NER), homologous recombination-mediated double-strand break DNA repair, DNA replication and RNA polymerase II (POL II) transcription. As part of the mitotic spindle-associated MMXD complex, plays a role in chromosome segregation, probably by facilitating iron-sulfur (Fe-S) cluster assembly into ERCC2/XPD. Together with CIAO2, facilitates the transfer of Fe-S clusters to the motor protein KIF4A, which ensures proper localization of KIF4A to mitotic machinery components to promote the progression of mitosis. Indirectly acts as a transcriptional coactivator of estrogen receptor (ER), via its role in iron-sulfur insertion into some component of the TFIIH-machinery. The sequence is that of MMS19 nucleotide excision repair protein homolog from Homo sapiens (Human).